The sequence spans 442 residues: UDP-glycosyltransferase 79B8 (442 aa).

Residues serine 260, 319-321 (VQQ), 336-344 (HCGPGTIWE), and 358-361 (LGDQ) contribute to the UDP-alpha-D-glucose site.

Belongs to the UDP-glycosyltransferase family.

This Arabidopsis thaliana (Mouse-ear cress) protein is UDP-glycosyltransferase 79B8 (UGT79B8).